Consider the following 129-residue polypeptide: Aspartate 1-decarboxylase (129 aa).

The active-site Schiff-base intermediate with substrate; via pyruvic acid is serine 25. At serine 25 the chain carries Pyruvic acid (Ser). Threonine 57 is a substrate binding site. The active-site Proton donor is the tyrosine 58. Residue 73-75 (GAA) coordinates substrate.

This sequence belongs to the PanD family. As to quaternary structure, heterooctamer of four alpha and four beta subunits. Pyruvate serves as cofactor. Post-translationally, is synthesized initially as an inactive proenzyme, which is activated by self-cleavage at a specific serine bond to produce a beta-subunit with a hydroxyl group at its C-terminus and an alpha-subunit with a pyruvoyl group at its N-terminus.

Its subcellular location is the cytoplasm. It catalyses the reaction L-aspartate + H(+) = beta-alanine + CO2. It participates in cofactor biosynthesis; (R)-pantothenate biosynthesis; beta-alanine from L-aspartate: step 1/1. Catalyzes the pyruvoyl-dependent decarboxylation of aspartate to produce beta-alanine. In Chlorobium chlorochromatii (strain CaD3), this protein is Aspartate 1-decarboxylase.